Consider the following 599-residue polypeptide: Elongation factor 4 (599 aa).

A tr-type G domain is found at 2–184 (KHIRNFSIIA…RLVRDIPPPQ (183 aa)). Residues 14-19 (DHGKST) and 131-134 (NKID) each bind GTP.

Belongs to the TRAFAC class translation factor GTPase superfamily. Classic translation factor GTPase family. LepA subfamily.

Its subcellular location is the cell inner membrane. It catalyses the reaction GTP + H2O = GDP + phosphate + H(+). Functionally, required for accurate and efficient protein synthesis under certain stress conditions. May act as a fidelity factor of the translation reaction, by catalyzing a one-codon backward translocation of tRNAs on improperly translocated ribosomes. Back-translocation proceeds from a post-translocation (POST) complex to a pre-translocation (PRE) complex, thus giving elongation factor G a second chance to translocate the tRNAs correctly. Binds to ribosomes in a GTP-dependent manner. The chain is Elongation factor 4 from Yersinia enterocolitica serotype O:8 / biotype 1B (strain NCTC 13174 / 8081).